The sequence spans 2798 residues: MVRDLAAVRRTPARASTSSSASEVGNDENAPVDASDAAVVEPEAAAARPPLLAIQPPQSGLKRKPESPAPTPSKLPFRTPEKAAARSRFGWVPPRGEEQPPPRVGGTPYSAVSTPGRHRGKSSAAAASEGGGGSTQSTPTKSVTKPAYSIGMSASRPPMSSGQRGAGLGLGFSMAARGTPMSFAPVTVVNTAEVPHFELREDPSFWMENNVQVVIRVRPLNNTERNLHNYNRCLKQESAQSITWIGQPESRFTFDHVACEAVNQEVLFRVAGLPMVENCMAGYNSCIFAYGQTGSGKTYTMLGEISELEVRPSQDRGMTPRIFEFLFARIRAEEESRRDEKLKYNCKCSFLEIYNEQITDLLDPSSTNLPLREDIRNGVYVENLTELEVGCVSDIIKLLMQGSANRKVAATNMNRESSRSHSVFTCIIESRWEKDSASNLRFARLNLVDLAGSERQRTSGAAGERLKEAANINKSLSTLGLVIMSLVDQAHGKQRHVPYRDSRLTFLLQDSLGGNSKTMIIANVSPSVCSASETLSTLKFAQRARLIQNNAVVNEDASGDVLALQHQIRLLKEELAVLKRQRVPRSLSFTSDIFERSGVDVDDGTESMNMDEENDNDAHDRRSLQDLRISNKQLRLLEETLAGAFRRESVAEATVKQLEAEIEQLNRMVYERENDTRSAKMTLKFREDKIHQMEALVRDKLPAESYLLEENNTLLKEIDLLRAKIDKNPEVTRFALENIRLSNKLKSYNQFCNEGEREHLLNEVSILRNQVLQILERRAEAEQPNNFPTNFELKRTSQELETCRGELQACLEANKKLAREIADLQNELSNIHSSNREGHPNVVEKFSSALNQYDSHAPEKKDQCFQEGFMINTDDILNLQLELDIIKTILAEERTTRAEVEKRITCLDDELKAANIHILQTCRQSETMQRELSDARSVIEALESQQIMLINELDELKESNQQSLEHLKKRDLEISRLNNELDVHRRQEFLAMEEPKVQLLKCFENDDSPLQTKLKRMQASLEKARKLNTRYQRDQASHSSAQQEMDEVSRQVEVETAEVIMCLQEELISLQQQLDASSKNELLANQRIDEARLEREQLNDRLLEVMKENECFSALIEEKDKKIGMLTNDWDKLASDIGNFLLDGNAALDEASDQVAFISESISQRKWIEDQVQKMCRGISQRDELLKELQSRLKEADDIRCDLDLKLRSLRGAMQAINDTHQQEKNDQENAMSVLRSQESNERYVNQQQLQELQRIQLLLDESIESFVQKEVIEQSYISLQRAMEEVIHHLESQLDQSKRDLTQLLSETQDKEQAFERLKNEENGVLLTVLSDVLKAKGVIHEFETGFNAIQSSFSVDPEEVVCQNSDLNLEDRVGCDPTGAFEAGEKHNGDVLCKLSKEMECVVYTMQMLQSQMVKLLQEKENAKEYHFQSQRTIKDVSAKVLQLKSEIIDKEKGYEARLKELEIKMQEKEKDTAESFISWNKEREALELEVSEAKSLAIQKSFEASTLISKFEEAQATISDADTTVNALVEANEKAKLQIQNFKENEALFLSEKERLLTEISSLKMLLDVKDQTYEVMEKKFAASLLEANDLALELEDGIRHLQNLLLEKLEFVSSDVEWMKSKLQQFAELARTWLEENWLEIIGKDCAVSVLHLCHMGILLERITGLNAENGFLQRGLCESNSLISKLREHNDRAKNELEMCSVLKGKLLLDINHNFSRIAKKEQEATELNSRLDAFEKKILHLQAQEEAMLARSNSMYNELSILVEEIDATNKSALATESKEKEELRHQLDEALLCNAMLKDIIQEDVDLPQVNNYMKGCSEFELCNRLADYHNELVTTNIIAKDIESFVLSSELVQQKAQLQKQELMFIDALDGLTTEATLSRVDKDLGSAVIFSLLDDSNKIMIDFDNLKQNKDELMENLHVLSEENLNLRSVVGSLESSIESLQTELDGKTKALMELQYSHTTILEEFKLKSKATELGVSRENDLRSENNLLKHEYLDIVRKEQMMAELVANLDSEKLFVTIQGRLEQVADQVQMYTSDQLNMVTKVSNEIDFIQMSIEGLITHNGFLQSELIRKDELAKGLSFDLSLLQESASVAKDQADELIQLTEAIESLEPELDSKSNELVDAVSGRQLLEAQILKSNQKVSALEEQLASKINELKEVSVEKDELTSKLNHIEGISYTMEDELADKSKAIERLEEELIELRSLLDARTCFLQNLQNDFSKLLDEKKYCETQVLILNEKLEMAQALAEESEAIATEAKQMAEERKTHAEEKDEEVKLLERSIEELETTVCALENKVDIIKEEAERQRMHREEIELELQKVRQQMLAVPSSGQATSSLEGGMGDFTDSSRHSREIKNELLAAQENIRILQKDVAEKETEIAQCKAHISELNIHAEAAAREYKQKFMELEAMAQQVKSDNTSANACSTRPEKISLKPRGSGSPFKCIGLGFVQQMNSEKDEELSAAKQRIMELEGIAASRQREIFMLNARLATTESMTHDVIRDMLGVKMNMATWAALVDNQQQMDTQESAVTQAHESKEQSDELMKLRSQLDELIEERQSWLDEINQRQSELGAARITIEKLRQKEHFMVAEIELLKAENANGKAIIFNLEDEVKKLTRQQNLQLRINHHEENNLLKKQNEELSAKLQKLGAVVARTKEELARYRVSDGKDPYEQMEEEELLRNRLEESEQDRSKLAENLSSLCATVLKIAGVRNHESDASLLKALEALNQIQLRIASMEAGVEDLKLKCKLLHEKARLSELRSESSSLSSGRSRSPSVCRSPSISSFR.

Residues 1–165 (MVRDLAAVRR…RPPMSSGQRG (165 aa)) are disordered. Composition is skewed to low complexity over residues 8-22 (VRRTPARASTSSSAS) and 31-58 (PVDASDAAVVEPEAAAARPPLLAIQPPQ). The Kinesin motor domain maps to 210-547 (NVQVVIRVRP…LKFAQRARLI (338 aa)). 291 to 298 (GQTGSGKT) serves as a coordination point for ATP. Residues 600 to 615 (DVDDGTESMNMDEEND) are compositionally biased toward acidic residues. The disordered stretch occupies residues 600-621 (DVDDGTESMNMDEENDNDAHDR). 5 coiled-coil regions span residues 792 to 835 (ELKR…HSSN), 890 to 987 (LAEE…HRRQ), 1014 to 1108 (LKRM…VMKE), 1281 to 1322 (QRAM…LKNE), and 2130 to 2333 (ELVD…VRQQ). Residues 2338 to 2359 (PSSGQATSSLEGGMGDFTDSSR) form a disordered region. Coiled coils occupy residues 2361–2427 (SREI…VKSD) and 2545–2758 (ESKE…LKLK). The interval 2772-2798 (RSESSSLSSGRSRSPSVCRSPSISSFR) is disordered. The segment covering 2774–2798 (ESSSLSSGRSRSPSVCRSPSISSFR) has biased composition (low complexity).

The protein belongs to the TRAFAC class myosin-kinesin ATPase superfamily. Kinesin family. KIN-12 subfamily.

The polypeptide is Kinesin-like protein KIN-12F (Oryza sativa subsp. japonica (Rice)).